The chain runs to 134 residues: UPF0412 protein YaaI (134 aa).

A signal peptide spans M1 to A23.

The protein belongs to the UPF0412 family.

This Shigella dysenteriae serotype 1 (strain Sd197) protein is UPF0412 protein YaaI.